The primary structure comprises 141 residues: Large ribosomal subunit protein uL11 (141 aa).

The protein belongs to the universal ribosomal protein uL11 family. In terms of assembly, part of the ribosomal stalk of the 50S ribosomal subunit. Interacts with L10 and the large rRNA to form the base of the stalk. L10 forms an elongated spine to which L12 dimers bind in a sequential fashion forming a multimeric L10(L12)X complex. In terms of processing, one or more lysine residues are methylated.

In terms of biological role, forms part of the ribosomal stalk which helps the ribosome interact with GTP-bound translation factors. This chain is Large ribosomal subunit protein uL11, found in Bacillus cereus (strain ATCC 10987 / NRS 248).